Here is a 120-residue protein sequence, read N- to C-terminus: UPF0102 protein PST_1070 (120 aa).

This sequence belongs to the UPF0102 family.

This is UPF0102 protein PST_1070 from Stutzerimonas stutzeri (strain A1501) (Pseudomonas stutzeri).